The sequence spans 355 residues: Histidinol-phosphate aminotransferase (355 aa).

Lys222 is subject to N6-(pyridoxal phosphate)lysine.

The protein belongs to the class-II pyridoxal-phosphate-dependent aminotransferase family. Histidinol-phosphate aminotransferase subfamily. Requires pyridoxal 5'-phosphate as cofactor.

It carries out the reaction L-histidinol phosphate + 2-oxoglutarate = 3-(imidazol-4-yl)-2-oxopropyl phosphate + L-glutamate. The protein operates within amino-acid biosynthesis; L-histidine biosynthesis; L-histidine from 5-phospho-alpha-D-ribose 1-diphosphate: step 7/9. The protein is Histidinol-phosphate aminotransferase of Natronomonas pharaonis (strain ATCC 35678 / DSM 2160 / CIP 103997 / JCM 8858 / NBRC 14720 / NCIMB 2260 / Gabara) (Halobacterium pharaonis).